The following is a 706-amino-acid chain: Phenylalanine--tRNA ligase beta subunit, chloroplastic (706 aa).

The B5 domain occupies 300-388 (KVLKPIVLNY…RLHGFNNFLT (89 aa)). Mg(2+) is bound by residues D366, D372, E375, and E376. The FDX-ACB domain occupies 612–705 (SVYPKIVKDL…LELKVQAILR (94 aa)).

This sequence belongs to the phenylalanyl-tRNA synthetase beta subunit family. Type 1 subfamily. In terms of assembly, tetramer of two alpha and two beta subunits. It depends on Mg(2+) as a cofactor.

The protein resides in the plastid. The protein localises to the chloroplast. The catalysed reaction is tRNA(Phe) + L-phenylalanine + ATP = L-phenylalanyl-tRNA(Phe) + AMP + diphosphate + H(+). This is Phenylalanine--tRNA ligase beta subunit, chloroplastic from Phaeodactylum tricornutum (strain CCAP 1055/1).